The chain runs to 369 residues: UPF0324 membrane protein DVU_0543 (369 aa).

Helical transmembrane passes span 13–31 (IVPGLLVMVGTLYVLRTYV), 46–65 (WLVQVLSLNYILLSILTGMF), 110–132 (GGVAITLIVAFVFGTAIFIMWLG), 142–164 (TATMAAACGVCGVSAAVATAPGV), 171–193 (LALSIATILGFGIMTMFVSPFIG), 240–262 (WNVVRVICIPFVVFFITAWYWKG), 269–291 (TSLGSILASKFPIFVLGFVGMTA), 306–328 (LHLMRDVMAWIFGVGLVGLGAYI), and 341–363 (LRIGLIAGMVKYILALIIILAFI).

The protein belongs to the UPF0324 family.

The protein resides in the cell membrane. The chain is UPF0324 membrane protein DVU_0543 from Nitratidesulfovibrio vulgaris (strain ATCC 29579 / DSM 644 / CCUG 34227 / NCIMB 8303 / VKM B-1760 / Hildenborough) (Desulfovibrio vulgaris).